We begin with the raw amino-acid sequence, 914 residues long: Exoglucanase-2 (914 aa).

The N-terminal stretch at 1–33 is a signal peptide; sequence MKRRLMKGISLLTLVFLIGIMLQLSLKSELTAY. One can recognise a CBM3 domain in the interval 763 to 914; sequence VEGVLIIQSF…SGNLVYGIEP (152 aa).

It belongs to the glycosyl hydrolase 48 (cellulase L) family.

The enzyme catalyses Hydrolysis of (1-&gt;4)-beta-D-glucosidic linkages in cellulose and cellotetraose, releasing cellobiose from the non-reducing ends of the chains.. The chain is Exoglucanase-2 (celY) from Thermoclostridium stercorarium (strain ATCC 35414 / DSM 8532 / NCIMB 11754) (Clostridium stercorarium).